The primary structure comprises 52 residues: Large ribosomal subunit protein bL32c (52 aa).

It belongs to the bacterial ribosomal protein bL32 family.

It is found in the plastid. The protein localises to the chloroplast. The protein is Large ribosomal subunit protein bL32c of Lobularia maritima (Sweet alyssum).